The chain runs to 498 residues: Glycerol kinase (498 aa).

Thr-12 provides a ligand contact to ADP. Thr-12, Thr-13, and Ser-14 together coordinate ATP. Residue Thr-12 coordinates sn-glycerol 3-phosphate. Arg-16 serves as a coordination point for ADP. 4 residues coordinate sn-glycerol 3-phosphate: Arg-82, Glu-83, Tyr-134, and Asp-243. 5 residues coordinate glycerol: Arg-82, Glu-83, Tyr-134, Asp-243, and Gln-244. The ADP site is built by Thr-265 and Gly-308. ATP is bound by residues Thr-265, Gly-308, Gln-312, and Gly-409. 2 residues coordinate ADP: Gly-409 and Asn-413.

Belongs to the FGGY kinase family. As to quaternary structure, homotetramer and homodimer (in equilibrium).

The enzyme catalyses glycerol + ATP = sn-glycerol 3-phosphate + ADP + H(+). Its pathway is polyol metabolism; glycerol degradation via glycerol kinase pathway; sn-glycerol 3-phosphate from glycerol: step 1/1. With respect to regulation, activated by phosphorylation and inhibited by fructose 1,6-bisphosphate (FBP). Functionally, key enzyme in the regulation of glycerol uptake and metabolism. Catalyzes the phosphorylation of glycerol to yield sn-glycerol 3-phosphate. The sequence is that of Glycerol kinase from Clostridium botulinum (strain Langeland / NCTC 10281 / Type F).